A 258-amino-acid polypeptide reads, in one-letter code: UPF0246 protein YaaA (258 aa).

It belongs to the UPF0246 family.

In Shigella boydii serotype 18 (strain CDC 3083-94 / BS512), this protein is UPF0246 protein YaaA.